The sequence spans 599 residues: Elongation factor 4 (599 aa).

Residues 5-187 (SHIRNFSIIA…RLVTVIPAPE (183 aa)) form the tr-type G domain. GTP contacts are provided by residues 17 to 22 (DHGKST) and 134 to 137 (NKMD).

The protein belongs to the TRAFAC class translation factor GTPase superfamily. Classic translation factor GTPase family. LepA subfamily.

It is found in the cell inner membrane. The catalysed reaction is GTP + H2O = GDP + phosphate + H(+). Required for accurate and efficient protein synthesis under certain stress conditions. May act as a fidelity factor of the translation reaction, by catalyzing a one-codon backward translocation of tRNAs on improperly translocated ribosomes. Back-translocation proceeds from a post-translocation (POST) complex to a pre-translocation (PRE) complex, thus giving elongation factor G a second chance to translocate the tRNAs correctly. Binds to ribosomes in a GTP-dependent manner. The sequence is that of Elongation factor 4 from Pseudomonas paraeruginosa (strain DSM 24068 / PA7) (Pseudomonas aeruginosa (strain PA7)).